The primary structure comprises 493 residues: GTPase Der (493 aa).

EngA-type G domains are found at residues 3-166 (PVVA…SGKG) and 207-380 (LKLA…DCAT). GTP contacts are provided by residues 9 to 16 (GRPNVGKS), 56 to 60 (DTGGI), 118 to 121 (NKTD), 213 to 220 (GKPNVGKS), 260 to 264 (DTAGV), and 325 to 328 (NKWD). A KH-like domain is found at 381-465 (RRVNTSLLTR…PIRIQFKEGA (85 aa)).

The protein belongs to the TRAFAC class TrmE-Era-EngA-EngB-Septin-like GTPase superfamily. EngA (Der) GTPase family. In terms of assembly, associates with the 50S ribosomal subunit.

Its function is as follows. GTPase that plays an essential role in the late steps of ribosome biogenesis. This is GTPase Der from Photorhabdus laumondii subsp. laumondii (strain DSM 15139 / CIP 105565 / TT01) (Photorhabdus luminescens subsp. laumondii).